The primary structure comprises 488 residues: 3-octaprenyl-4-hydroxybenzoate carboxy-lyase (488 aa).

Asn-172 contributes to the Mn(2+) binding site. Prenylated FMN is bound by residues 175–177 (IYR), 189–191 (RWL), and 194–195 (RG). Glu-238 provides a ligand contact to Mn(2+). The Proton donor role is filled by Asp-287.

Belongs to the UbiD family. In terms of assembly, homohexamer. Requires prenylated FMN as cofactor. Mn(2+) is required as a cofactor.

The protein localises to the cell membrane. The catalysed reaction is a 4-hydroxy-3-(all-trans-polyprenyl)benzoate + H(+) = a 2-(all-trans-polyprenyl)phenol + CO2. Its pathway is cofactor biosynthesis; ubiquinone biosynthesis. In terms of biological role, catalyzes the decarboxylation of 3-octaprenyl-4-hydroxy benzoate to 2-octaprenylphenol, an intermediate step in ubiquinone biosynthesis. This is 3-octaprenyl-4-hydroxybenzoate carboxy-lyase from Azotobacter vinelandii (strain DJ / ATCC BAA-1303).